The primary structure comprises 128 residues: uncharacterized protein (128 aa).

The next 3 membrane-spanning stretches (helical) occupy residues 19-41 (MAIVTNTPIWVWCVLLCLLYVGS), 54-71 (LTFLPLIFLPIVIMSIMQ), and 75-97 (PLIAGFGFIVGLALGLFFRVDNL).

Its subcellular location is the cell membrane. This is an uncharacterized protein from Pasteurella multocida (strain Pm70).